A 166-amino-acid polypeptide reads, in one-letter code: Protein-export protein SecB (166 aa).

It belongs to the SecB family. Homotetramer, a dimer of dimers. One homotetramer interacts with 1 SecA dimer.

The protein localises to the cytoplasm. Its function is as follows. One of the proteins required for the normal export of preproteins out of the cell cytoplasm. It is a molecular chaperone that binds to a subset of precursor proteins, maintaining them in a translocation-competent state. It also specifically binds to its receptor SecA. The sequence is that of Protein-export protein SecB from Sinorhizobium fredii (strain NBRC 101917 / NGR234).